Here is a 102-residue protein sequence, read N- to C-terminus: Small ribosomal subunit protein uS10 (102 aa).

It belongs to the universal ribosomal protein uS10 family. In terms of assembly, part of the 30S ribosomal subunit.

Its function is as follows. Involved in the binding of tRNA to the ribosomes. The chain is Small ribosomal subunit protein uS10 from Planobispora rosea.